A 434-amino-acid polypeptide reads, in one-letter code: Glutamate-1-semialdehyde 2,1-aminomutase (434 aa).

N6-(pyridoxal phosphate)lysine is present on K274.

Belongs to the class-III pyridoxal-phosphate-dependent aminotransferase family. HemL subfamily. In terms of assembly, homodimer. It depends on pyridoxal 5'-phosphate as a cofactor.

It localises to the cytoplasm. It carries out the reaction (S)-4-amino-5-oxopentanoate = 5-aminolevulinate. It participates in porphyrin-containing compound metabolism; protoporphyrin-IX biosynthesis; 5-aminolevulinate from L-glutamyl-tRNA(Glu): step 2/2. The protein is Glutamate-1-semialdehyde 2,1-aminomutase of Acidovorax ebreus (strain TPSY) (Diaphorobacter sp. (strain TPSY)).